An 889-amino-acid polypeptide reads, in one-letter code: Alanine--tRNA ligase (889 aa).

Residues histidine 587, histidine 591, cysteine 691, and histidine 695 each contribute to the Zn(2+) site. Disordered regions lie at residues 734 to 760 (QQEQ…EENK) and 866 to 889 (AQGG…MILG). The span at 872-881 (DTSKKDEAIS) shows a compositional bias: basic and acidic residues.

This sequence belongs to the class-II aminoacyl-tRNA synthetase family. Requires Zn(2+) as cofactor.

It is found in the cytoplasm. The enzyme catalyses tRNA(Ala) + L-alanine + ATP = L-alanyl-tRNA(Ala) + AMP + diphosphate. Its function is as follows. Catalyzes the attachment of alanine to tRNA(Ala) in a two-step reaction: alanine is first activated by ATP to form Ala-AMP and then transferred to the acceptor end of tRNA(Ala). Also edits incorrectly charged Ser-tRNA(Ala) and Gly-tRNA(Ala) via its editing domain. This is Alanine--tRNA ligase from Nitrosopumilus maritimus (strain SCM1).